A 337-amino-acid chain; its full sequence is DNA-directed RNA polymerase subunit alpha (337 aa).

Residues 1 to 233 are alpha N-terminal domain (alpha-NTD); it reads MVREEVVGST…DLFIPFLHAE (233 aa). The segment at 265–337 is alpha C-terminal domain (alpha-CTD); the sequence is KEIALKCIFI…FAIDLPKNKF (73 aa).

The protein belongs to the RNA polymerase alpha chain family. As to quaternary structure, in plastids the minimal PEP RNA polymerase catalytic core is composed of four subunits: alpha, beta, beta', and beta''. When a (nuclear-encoded) sigma factor is associated with the core the holoenzyme is formed, which can initiate transcription.

Its subcellular location is the plastid. It is found in the chloroplast. It carries out the reaction RNA(n) + a ribonucleoside 5'-triphosphate = RNA(n+1) + diphosphate. In terms of biological role, DNA-dependent RNA polymerase catalyzes the transcription of DNA into RNA using the four ribonucleoside triphosphates as substrates. The polypeptide is DNA-directed RNA polymerase subunit alpha (Acorus gramineus (Dwarf sweet flag)).